Consider the following 1223-residue polypeptide: MSADNEDYYDEDPYGFEEENAPITAEDTWAVISAFFREKGLVSQQLDSFNQFVDYTLQDIISEDSTLILEQLAQHTTEQDNISRKYEISFGKIYVTKPMVNESDGVTHALYPQEARLRNLTYSSGLFVDVTKRTYEAVDVPGRDLNYQLIAEESEEDSESGKVFIGRLPIMLRSKNCYLSDATESDLYKLKECPFDMGGYFIINGSEKVLIAQERSAGNIVQVFKKAAPSPISHVAEIRSALEKGSRFISTLQVKLYGRESSSARTIKATLPYIKQDIPIVIIFRALGIIPDGEILEHICYDVNDWQMLEMLKPCVEDGFVIQDRETALDFIGRRGTALGIKKEKRIQYAKDILQKEFLPHITQLEGFESRKAFFLGYMINRLLLCALDRKDQDDRDHFGKKRLDLAGPLLAQLFKTLFRKLTKDIFRYMQRTVEEANDFNMKLAINAKTITSGLKYALATGNWGEQKKAMSSRAGVSQVLNRYTYSSTLSHLRRTNTPIGRDGKLAKPRQLHNTHWGLVCPAETPEGQACGLVKNLSLMSCISVGADPMPIITFLSEWGMEPLEDYVPHQSPDATRVFVNGVWHGVHRNPARLMETLRTLRRKGDINPEVSMIRDIREQELKIFTDAGRVYRPLFIVEDDEELGRKELKVRKGHVAKLMATEYQDIEGGFEDAEDYTWSSLLNEGLVEYIDAEEEESILIAMQPEDLEPTAVEQDIPKENVDLAKRIKVTHHATTFTHCEIHPSMILGVAASIIPFPDHNQSPRNTYQSAMGKQAMGVFLTNYNFRMDTMANILYYPQKPLGTTRAMEYLKFRELPAGQNAIVAIACYSGYNQEDSMIMNQSSIDRGLFRSLFFRSYMDQEKKYGMSITETFEKPQRTNTLRMKHGTYDKLDEDGLIAPGVRVSGEDIIIGKTTPIAPDEEELGQRTAYHSKRDASTPLRSTENGIVDQVLITTNQDGLKFVKVRVRTTKVPQIGDKFASRHGQKGTIGITYRREDMPFTAEGIVPDLIINPHAIPSRMTVAHLIECLLSKVAALSGNEGDASPFTDITVEGISKLLREHGYQSRGFEVMYNGHTGKKLMAQIFFGPTYYQRLRHMVDDKIHARARGPMQVLTRQPVEGRSRDGGLRFGEMERDCMIAHGAAAFLKERLMEASDAFRVHICGICGLMSVIAKLNHNQFECKGCDNKIDIYQIHIPYAAKLLFQELMAMNITPRLYTDRSRDF.

The interval 1–20 (MSADNEDYYDEDPYGFEEEN) is disordered. A Mg(2+)-binding site is contributed by Asp-836. Zn(2+) is bound by residues Cys-1162, Cys-1165, Cys-1181, and Cys-1184. The C4-type zinc-finger motif lies at 1162–1184 (CGICGLMSVIAKLNHNQFECKGC).

Belongs to the RNA polymerase beta chain family. Component of the RNA polymerase II (Pol II) complex consisting of 12 subunits.

Its subcellular location is the nucleus. It catalyses the reaction RNA(n) + a ribonucleoside 5'-triphosphate = RNA(n+1) + diphosphate. In terms of biological role, DNA-dependent RNA polymerase catalyzes the transcription of DNA into RNA using the four ribonucleoside triphosphates as substrates. Second largest component of RNA polymerase II which synthesizes mRNA precursors and many functional non-coding RNAs. Proposed to contribute to the polymerase catalytic activity and forms the polymerase active center together with the largest subunit. Pol II is the central component of the basal RNA polymerase II transcription machinery. It is composed of mobile elements that move relative to each other. RPB2 is part of the core element with the central large cleft, the clamp element that moves to open and close the cleft and the jaws that are thought to grab the incoming DNA template. The polypeptide is DNA-directed RNA polymerase II subunit RPB2 (RPB2) (Candida glabrata (strain ATCC 2001 / BCRC 20586 / JCM 3761 / NBRC 0622 / NRRL Y-65 / CBS 138) (Yeast)).